The following is a 1002-amino-acid chain: Probable transport protein MmpL10 (1002 aa).

Helical transmembrane passes span 1 to 21, 177 to 197, 199 to 219, 228 to 248, 268 to 288, 306 to 326, 358 to 378, 806 to 826, 835 to 855, 862 to 882, 901 to 921, and 923 to 943; these read MVGC…SLAE, IAVM…TMLL, LVTI…VSLV, AIVL…VFLI, AMMS…ITFL, AIGI…ILVL, YLGA…LAHF, IVAV…RAIV, VVIS…VFLG, VPGL…MLLA, VRCT…SMSG, and LFSS…GILI.

The protein belongs to the resistance-nodulation-cell division (RND) (TC 2.A.6) family. MmpL subfamily.

The protein localises to the cell membrane. The chain is Probable transport protein MmpL10 (mmpL10) from Mycobacterium bovis (strain ATCC BAA-935 / AF2122/97).